Here is a 952-residue protein sequence, read N- to C-terminus: Histone deacetylase 7 (952 aa).

Transcription repression regions lie at residues 1-268 (MDLR…DSDR) and 218-546 (GPNP…EHAG). Residues 49–149 (SMDTPMPELQ…LPSDPPEHFP (101 aa)) are interaction with MEF2A. S109 is modified (phosphoserine). Disordered regions lie at residues 130-224 (LSSF…PILG) and 261-283 (PARADSDRRTHPTLGPRGPILGS). Phosphoserine; by MARK2, MARK3 and PKD/PRKD1 is present on S155. A compositionally biased stretch (basic and acidic residues) spans 167–181 (KSLERRKNPLLRKES). S181 is modified (phosphoserine; by PKD/PRKD2). The segment covering 197–212 (SSPSSSSTPASGCSSP) has biased composition (low complexity). At S283 the chain carries Phosphoserine. T286 bears the Phosphothreonine mark. Disordered regions lie at residues 349-377 (LHWPLSRTRSEPLPPSATAPPPPGPMQPR), 389-441 (KRSA…GPAP), and 460-510 (LPRG…SSSE). Residue S358 is modified to Phosphoserine; by PKD/PRKD1. Over residues 360 to 374 (PLPPSATAPPPPGPM) the composition is skewed to pro residues. Residues S364, S405, S486, S487, and S507 each carry the phosphoserine modification. A compositionally biased stretch (low complexity) spans 482 to 503 (SRAQSSPAAPASLSAPEPASQA). The tract at residues 512–865 (PARTLPFTTG…VAALLGNRVD (354 aa)) is histone deacetylase. Zn(2+)-binding residues include C533, C535, and H541. S595 bears the Phosphoserine mark. Position 618 (C618) interacts with Zn(2+). H670 is an active-site residue. An interaction with SIN3A region spans residues 877–952 (NLNAIRSLEA…LVEEEEPMNL (76 aa)). The short motif at 917-952 (KEEVEAVTALASLSVGILAEDRPSEQLVEEEEPMNL) is the Nuclear export signal element.

The protein belongs to the histone deacetylase family. HD type 2 subfamily. Interacts with HDAC1, HDAC2, HDAC3, HDAC4, HDAC5, NCOR1, NCOR2, SIN3A, SIN3B, RBBP4, RBBP7, MTA1L1, SAP30 and MBD3. Interacts with KAT5 and EDNRA. Interacts with the 14-3-3 protein YWHAE, MEF2A, MEF2B and MEF2C. Interacts with ZMYND15. Interacts with KDM5B. Interacts with PML. Interacts with FOXP3. Interacts with RARA. Post-translationally, may be phosphorylated by CaMK1. Phosphorylated by the PKC kinases PKN1 and PKN2, impairing nuclear import. Phosphorylation at Ser-155 by MARK2, MARK3 and PRKD1 promotes interaction with 14-3-3 proteins and export from the nucleus. Phosphorylation at Ser-155 is a prerequisite for phosphorylation at Ser-181.

Its subcellular location is the nucleus. It localises to the cytoplasm. The catalysed reaction is N(6)-acetyl-L-lysyl-[histone] + H2O = L-lysyl-[histone] + acetate. It carries out the reaction N(6)-acetyl-L-lysyl-[protein] + H2O = L-lysyl-[protein] + acetate. In terms of biological role, responsible for the deacetylation of lysine residues on the N-terminal part of the core histones (H2A, H2B, H3 and H4). Histone deacetylation gives a tag for epigenetic repression and plays an important role in transcriptional regulation, cell cycle progression and developmental events. Histone deacetylases act via the formation of large multiprotein complexes. Involved in muscle maturation by repressing transcription of myocyte enhancer factors such as MEF2A, MEF2B and MEF2C. During muscle differentiation, it shuttles into the cytoplasm, allowing the expression of myocyte enhancer factors. May be involved in Epstein-Barr virus (EBV) latency, possibly by repressing the viral BZLF1 gene. Positively regulates the transcriptional repressor activity of FOXP3. Serves as a corepressor of RARA, causing its deacetylation and inhibition of RARE DNA element binding. In association with RARA, plays a role in the repression of microRNA-10a and thereby in the inflammatory response. Also acetylates non-histone proteins, such as ALKBH5. This is Histone deacetylase 7 (HDAC7) from Homo sapiens (Human).